The sequence spans 244 residues: Phosphoadenosine 5'-phosphosulfate reductase (244 aa).

The active-site Nucleophile; cysteine thiosulfonate intermediate is the Cys-239.

Belongs to the PAPS reductase family. CysH subfamily.

It is found in the cytoplasm. The catalysed reaction is [thioredoxin]-disulfide + sulfite + adenosine 3',5'-bisphosphate + 2 H(+) = [thioredoxin]-dithiol + 3'-phosphoadenylyl sulfate. Its pathway is sulfur metabolism; hydrogen sulfide biosynthesis; sulfite from sulfate: step 3/3. Catalyzes the formation of sulfite from phosphoadenosine 5'-phosphosulfate (PAPS) using thioredoxin as an electron donor. This is Phosphoadenosine 5'-phosphosulfate reductase from Shigella boydii serotype 4 (strain Sb227).